Here is a 614-residue protein sequence, read N- to C-terminus: Acid phosphatase (614 aa).

The first 22 residues, 1 to 22 (MKGTAASALLVALSATAAQARP), serve as a signal peptide directing secretion. Residues 80 to 176 (IPKGMHIHYQ…EVLSFKTSRP (97 aa)) form the Fibronectin type-III domain. Residues Asn-110, Asn-161, Asn-242, Asn-295, Asn-333, Asn-340, Asn-352, Asn-408, Asn-429, Asn-512, Asn-523, Asn-559, and Asn-578 are each glycosylated (N-linked (GlcNAc...) asparagine). The propeptide occupies 606–614 (VAGGKKLHS).

As to quaternary structure, monomer. The cofactor is Cu cation. Post-translationally, glycosylated; probably with N-linked high-mannose oligosaccharides.

It is found in the secreted. The catalysed reaction is a phosphate monoester + H2O = an alcohol + phosphate. Its activity is regulated as follows. Competitively inhibited by phosphomycin and inorganic orthophosphate. The polypeptide is Acid phosphatase (aphA) (Aspergillus ficuum).